The chain runs to 501 residues: 5-beta-cholestane-3-alpha,7-alpha-diol 12-alpha-hydroxylase (501 aa).

A helical transmembrane segment spans residues 1-21 (MVLWGPVLGVLLVAIVGYLCL). Phosphoserine is present on S326. Residue C440 coordinates heme.

It belongs to the cytochrome P450 family. Heme is required as a cofactor.

It is found in the endoplasmic reticulum membrane. The protein localises to the microsome membrane. It carries out the reaction 7alpha-hydroxycholest-4-en-3-one + reduced [NADPH--hemoprotein reductase] + O2 = 7alpha,12alpha-dihydroxycholest-4-en-3-one + oxidized [NADPH--hemoprotein reductase] + H2O + H(+). The catalysed reaction is 5beta-cholestane-3alpha,7alpha-diol + reduced [NADPH--hemoprotein reductase] + O2 = 5beta-cholestane-3alpha,7alpha,12alpha-triol + oxidized [NADPH--hemoprotein reductase] + H2O + H(+). The enzyme catalyses chenodeoxycholate + reduced [NADPH--hemoprotein reductase] + O2 = cholate + oxidized [NADPH--hemoprotein reductase] + H2O + H(+). The protein operates within lipid metabolism; bile acid biosynthesis. In terms of biological role, a cytochrome P450 monooxygenase involved in primary bile acid biosynthesis. Catalyzes the 12alpha-hydroxylation of 7alpha-hydroxy-4-cholesten-3-one, an intermediate metabolite in cholic acid biosynthesis. Controls biliary balance of cholic acid and chenodeoxycholic acid, ultimately regulating the intestinal absorption of dietary lipids. Mechanistically, uses molecular oxygen inserting one oxygen atom into a substrate, and reducing the second into a water molecule, with two electrons provided by NADPH via cytochrome P450 reductase (CPR; NADPH--hemoprotein reductase). The sequence is that of 5-beta-cholestane-3-alpha,7-alpha-diol 12-alpha-hydroxylase (CYP8B1) from Sus scrofa (Pig).